The chain runs to 601 residues: Elongation factor 4 (601 aa).

The tr-type G domain occupies 7–189 (DNIRNFSIVA…AIVKRLPPPK (183 aa)). GTP is bound by residues 19-24 (DHGKST) and 136-139 (NKVD).

Belongs to the TRAFAC class translation factor GTPase superfamily. Classic translation factor GTPase family. LepA subfamily.

It localises to the cell inner membrane. The catalysed reaction is GTP + H2O = GDP + phosphate + H(+). Required for accurate and efficient protein synthesis under certain stress conditions. May act as a fidelity factor of the translation reaction, by catalyzing a one-codon backward translocation of tRNAs on improperly translocated ribosomes. Back-translocation proceeds from a post-translocation (POST) complex to a pre-translocation (PRE) complex, thus giving elongation factor G a second chance to translocate the tRNAs correctly. Binds to ribosomes in a GTP-dependent manner. In Methylorubrum populi (strain ATCC BAA-705 / NCIMB 13946 / BJ001) (Methylobacterium populi), this protein is Elongation factor 4.